Consider the following 775-residue polypeptide: Subtilisin-like protease SBT1.5 (775 aa).

The N-terminal stretch at 1–19 (MAFFFYFFFLLTLSSPSSS) is a signal peptide. A propeptide spans 20-103 (ASSSNSLTYI…VIPEQVRHLH (84 aa)) (activation peptide). In terms of domain architecture, Inhibitor I9 spans 27 to 103 (TYIVHVDHEA…VIPEQVRHLH (77 aa)). Residues 107–617 (SPEFLGLRST…SGHVHPTKAM (511 aa)) form the Peptidase S8 domain. D137 acts as the Charge relay system in catalysis. N-linked (GlcNAc...) asparagine glycosylation is present at N196. H210 (charge relay system) is an active-site residue. The region spanning 367-459 (MYPLVYGGSL…VGASGGDEIR (93 aa)) is the PA domain. Residue S549 is the Charge relay system of the active site. 3 N-linked (GlcNAc...) asparagine glycosylation sites follow: N599, N638, and N762.

The protein belongs to the peptidase S8 family.

It localises to the secreted. The sequence is that of Subtilisin-like protease SBT1.5 from Arabidopsis thaliana (Mouse-ear cress).